Here is a 407-residue protein sequence, read N- to C-terminus: Peptidase T (407 aa).

His82 contributes to the Zn(2+) binding site. The active site involves Asp84. Residue Asp143 coordinates Zn(2+). The active-site Proton acceptor is Glu177. Residues Glu178, Asp200, and His382 each coordinate Zn(2+).

Belongs to the peptidase M20B family. The cofactor is Zn(2+).

It is found in the cytoplasm. The enzyme catalyses Release of the N-terminal residue from a tripeptide.. Its function is as follows. Cleaves the N-terminal amino acid of tripeptides. The polypeptide is Peptidase T (Streptococcus pyogenes serotype M18 (strain MGAS8232)).